The sequence spans 190 residues: ADP-ribosylation factor-like protein 6 (190 aa).

The N-myristoyl glycine moiety is linked to residue glycine 2. GTP is bound by residues 24 to 31 (GLDNSGKT), threonine 50, 69 to 73 (DMAGQ), glycine 72, 130 to 133 (NKMD), and alanine 164. Residues threonine 31 and threonine 50 each contribute to the Mg(2+) site.

Belongs to the small GTPase superfamily. Arf family.

The protein resides in the cytoplasm. This is ADP-ribosylation factor-like protein 6 from Caenorhabditis briggsae.